Here is a 732-residue protein sequence, read N- to C-terminus: Probable ATP-dependent RNA helicase DHX35 homolog (732 aa).

Residues 1 to 50 are disordered; it reads MSYHPGHGHRQEPRKGAGARRGFARPDDSADAPRTGPLIFEERSTENAGA. The 165-residue stretch at 87 to 251 folds into the Helicase ATP-binding domain; it reads LYMCERYRTI…FEMNETGNSD (165 aa). 100–107 serves as a coordination point for ATP; the sequence is GETGCGKS. The DEAH box motif lies at 198–201; sequence DEAH. The region spanning 283–457 is the Helicase C-terminal domain; the sequence is AVDTVINIHK…STILQLKALG (175 aa).

It belongs to the DEAD box helicase family. DEAH subfamily.

The catalysed reaction is ATP + H2O = ADP + phosphate + H(+). The sequence is that of Probable ATP-dependent RNA helicase DHX35 homolog from Caenorhabditis elegans.